The following is a 130-amino-acid chain: Mitochondrial pyruvate carrier 1 (130 aa).

The next 2 membrane-spanning stretches (helical) occupy residues 23-45 (LKYI…IAAI) and 55-77 (ISGP…ALSV).

This sequence belongs to the mitochondrial pyruvate carrier (MPC) (TC 2.A.105) family. In terms of assembly, the functional 150 kDa pyruvate import complex is a heteromer of MPC1 and either MPC2 or MPC3.

It localises to the mitochondrion. The protein localises to the mitochondrion inner membrane. Functionally, mediates the uptake of pyruvate into mitochondria. The sequence is that of Mitochondrial pyruvate carrier 1 from Saccharomyces cerevisiae (strain ATCC 204508 / S288c) (Baker's yeast).